The following is a 328-amino-acid chain: Cytosolic Fe-S cluster assembly factor NBP35 (328 aa).

[4Fe-4S] cluster contacts are provided by cysteine 27, cysteine 41, cysteine 44, and cysteine 50. 80–87 (GKGGVGKS) contributes to the ATP binding site. [4Fe-4S] cluster contacts are provided by cysteine 253 and cysteine 256.

This sequence belongs to the Mrp/NBP35 ATP-binding proteins family. NUBP1/NBP35 subfamily. As to quaternary structure, heterotetramer of 2 NBP35 and 2 CFD1 chains. It depends on [4Fe-4S] cluster as a cofactor.

Its subcellular location is the cytoplasm. The protein localises to the nucleus. Its function is as follows. Component of the cytosolic iron-sulfur (Fe/S) protein assembly (CIA) machinery. Required for maturation of extramitochondrial Fe-S proteins. The NBP35-CFD1 heterotetramer forms a Fe-S scaffold complex, mediating the de novo assembly of an Fe-S cluster and its transfer to target apoproteins. Required for biogenesis and export of both ribosomal subunits, which may reflect a role in assembly of the Fe/S clusters in RLI1, a protein which performs rRNA processing and ribosome export. This Saccharomyces cerevisiae (strain ATCC 204508 / S288c) (Baker's yeast) protein is Cytosolic Fe-S cluster assembly factor NBP35.